We begin with the raw amino-acid sequence, 1703 residues long: MIGRLYMKKLKNLFLFLSSLCPVFPWISQISLVMPFGLYYGFLTALPIGPSQILSIRTFFLEGNRSGIICILGSMMGQFVILLSIYCSPLYVMLVKPHLMTLLVIPYMFYYWYRTKNPSRYYILHPIKSLTHAHTRNLLLDSFIFQLLNPILLPNPVLTRLLNLFLFRYSSNVFFLTSSLLGWLCGHILFINSIKLLLFRIEHDSPIIYILMKRSISRTFSILISITFFLYLGRSPVPLITKKFADEITLSDQKIKENLWEESLWLYRPWPTSFFDQYRWNRPIRYIPNSKSSHNGFVKKQVSKFFYDECITDGKNAISFASQPSLSIFKKQLMNYLHNSDISISTKDSYKGWIETKREKRDALNNEFKDRIQFVYNSSTIEEAMENKTGFSHDRNHFLVKVNDPFLSGSSRIRIPNKKYSSSLLKLHDSKDQTMKISKKTKRKHTRNKMRNWIFNKHKKWQHNKFPLPWEPIPTKAEKVFWRILNESENPIILEMLTTLNSIKEKNYQFRITWEHIFQLPRIEKAIFLFRSKQEIEDSIFRYPSHLSLKNLTLFNIFTRSKNIFYSAKIAVSPILQIEEMQKELPRYNSRLRSDRIDAVNVDVDIRQRKIKNLGPRKGKLEDKEKEKEKAAQTQTEVKKEREKEKEERVIKRFQNQSDFRRKLVKGSIRARRRKTGIWRLYQSGTHSPFFLRMKEIPISFQSSINALRLNKMKDERAILGIGKELRPFNLYKKRSKADRLTIAARFDFPIAHAGRGVLLIIQSNIRKYVILPILIICKNIGRIMLFQSPEWKEDWAEWNQEIHIKCTYDGIEVSHRHLPAHWFKEGLQIKILYPFHLKPWHIHRTNNINDLRNEAQIQKEISDFGKQRKLSFSYLTIWGYQTSSVFGSMKKRPSFWRPIANALKKKLQRNLFSKLTWISHFFYEIILLSRTFIISKKPNNIPEMSIQSNELRYDVSDYELIQKYPNSNEKNDYVVMNEISIESNNRNGKEISHESQDQYKDNFNNIRSFNDIETLLTDISGTSVEESYRDRIETYLRLNKKNHRYAINIRLIWNKQLVQTQQEFSRFRRIIMQFMHKGYRLAKRFLTKFYREIFRRFTFSIQLSIQLVLRLTKNITKLSEKNKVYQNLNLLKKNEQNLKIDSSRNKPVLSQAYVFQKLWHARTRTKIDVHYLVQSLEREIVNSIENNELKASKLKDLKWNEHNYLNDHIKDLLEIQGLLKETQTFTEKNWKEWLHCFTRYQISSKIEYGIVPQKWKNEVKKRWKSNTNKLDKNKEYKTLEKENKYSLYETNNMLKQRINNRNNYCEFYNLLYSFIDSTKASNIIKLPIQQKGKEDPIQYINDINKIHENIHLNSKKKYKRPQFQSISTEKGDIDSNLMLWLLPNLLDTKPESVTNSLDSYSFEMYLSQNEDKDSLKKEIRFNAKKLNLDTKEPTSDAMKPTSDTKELISDTNEPTSDIKSDDQSENQNKPLKEKSIRERKHHRPIPQVKWKSKSVEKKMQRINNLTSFLSVIEDRKNMENYIISFCMKMGIDIDLLNSFFTNTEDELSIQLLDDSAHRLPRLLNDQTLVRKMVSILLNFEKQFEEGITSKISSQSISSIYRTEKKYSVNSYNLEDIMLSRRYRELRILNSLILEKQYVNFDHWIDKSEKYPFLNLPSQVQIIKRFLWPTYRLEDLACMNRFWFNTNNGSRFAMLKLRMYCPD.

6 consecutive transmembrane segments (helical) span residues 39 to 61 (YYGFLTALPIGPSQILSIRTFFL), 67 to 87 (GIICILGSMMGQFVILLSIYC), 90 to 110 (LYVMLVKPHLMTLLVIPYMFY), 138 to 158 (LLLDSFIFQLLNPILLPNPVL), 174 to 194 (FFLTSSLLGWLCGHILFINSI), and 220 to 240 (FSILISITFFLYLGRSPVPLI). 2 disordered regions span residues 615 to 643 (GPRKGKLEDKEKEKEKAAQTQTEVKKERE) and 1431 to 1494 (TKEP…WKSK). The stretch at 618–660 (KGKLEDKEKEKEKAAQTQTEVKKEREKEKEERVIKRFQNQSDF) forms a coiled coil. The segment covering 619–643 (GKLEDKEKEKEKAAQTQTEVKKERE) has biased composition (basic and acidic residues).

The protein belongs to the TIC214 family. As to quaternary structure, part of the Tic complex.

Its subcellular location is the plastid. It localises to the chloroplast inner membrane. Its function is as follows. Involved in protein precursor import into chloroplasts. May be part of an intermediate translocation complex acting as a protein-conducting channel at the inner envelope. The polypeptide is Protein TIC 214 (Psilotum nudum (Whisk fern)).